Reading from the N-terminus, the 83-residue chain is Mu-theraphotoxin-Hhn2o (83 aa).

A signal peptide spans 1–21; sequence MKASMFLALAGLVLLFVVGYA. Residues 22 to 48 constitute a propeptide that is removed on maturation; the sequence is SESEEKEFPIELLSKIFAVDVFKGEER. Intrachain disulfides connect C50-C65, C57-C70, and C64-C77. The residue at position 81 (L81) is a Leucine amide.

Belongs to the neurotoxin 10 (Hwtx-1) family. 15 (Hntx-3) subfamily. In terms of assembly, monomer. As to expression, expressed by the venom gland.

It is found in the secreted. In terms of biological role, lethal neurotoxin. Selectively blocks tetrodotoxin-sensitive voltage-gated sodium channels (Nav). Does not affect tetrodotoxin-resistant voltage-gated sodium channels or calcium channels. This is Mu-theraphotoxin-Hhn2o from Cyriopagopus hainanus (Chinese bird spider).